The sequence spans 325 residues: Tagatose 1,6-diphosphate aldolase 1 (325 aa).

It belongs to the aldolase LacD family.

The enzyme catalyses D-tagatofuranose 1,6-bisphosphate = D-glyceraldehyde 3-phosphate + dihydroxyacetone phosphate. It functions in the pathway carbohydrate metabolism; D-tagatose 6-phosphate degradation; D-glyceraldehyde 3-phosphate and glycerone phosphate from D-tagatose 6-phosphate: step 2/2. The sequence is that of Tagatose 1,6-diphosphate aldolase 1 (lacD1) from Streptococcus pyogenes serotype M3 (strain SSI-1).